We begin with the raw amino-acid sequence, 62 residues long: Large ribosomal subunit protein uL29 (62 aa).

Belongs to the universal ribosomal protein uL29 family.

In Laribacter hongkongensis (strain HLHK9), this protein is Large ribosomal subunit protein uL29.